The chain runs to 262 residues: Tryptophan synthase alpha chain (262 aa).

Catalysis depends on proton acceptor residues Glu47 and Asp58.

This sequence belongs to the TrpA family. As to quaternary structure, tetramer of two alpha and two beta chains.

The catalysed reaction is (1S,2R)-1-C-(indol-3-yl)glycerol 3-phosphate + L-serine = D-glyceraldehyde 3-phosphate + L-tryptophan + H2O. It participates in amino-acid biosynthesis; L-tryptophan biosynthesis; L-tryptophan from chorismate: step 5/5. Functionally, the alpha subunit is responsible for the aldol cleavage of indoleglycerol phosphate to indole and glyceraldehyde 3-phosphate. The protein is Tryptophan synthase alpha chain of Chromobacterium violaceum (strain ATCC 12472 / DSM 30191 / JCM 1249 / CCUG 213 / NBRC 12614 / NCIMB 9131 / NCTC 9757 / MK).